Reading from the N-terminus, the 350-residue chain is Inositol 2-dehydrogenase/D-chiro-inositol 3-dehydrogenase (350 aa).

Belongs to the Gfo/Idh/MocA family. Homotetramer.

It carries out the reaction myo-inositol + NAD(+) = scyllo-inosose + NADH + H(+). The enzyme catalyses 1D-chiro-inositol + NAD(+) = scyllo-inosine + NADH + H(+). It participates in polyol metabolism; myo-inositol degradation into acetyl-CoA; acetyl-CoA from myo-inositol: step 1/7. In terms of biological role, involved in the oxidation of myo-inositol (MI) and D-chiro-inositol (DCI) to 2-keto-myo-inositol (2KMI or 2-inosose) and 1-keto-D-chiro-inositol (1KDCI), respectively. This is Inositol 2-dehydrogenase/D-chiro-inositol 3-dehydrogenase from Lactiplantibacillus plantarum (strain ATCC BAA-793 / NCIMB 8826 / WCFS1) (Lactobacillus plantarum).